A 303-amino-acid chain; its full sequence is Diaminopimelate epimerase (303 aa).

The substrate site is built by Asn-15, Gln-47, and Asn-67. Cys-76 acts as the Proton donor in catalysis. Substrate-binding positions include 77–78, Asn-163, Asn-197, and 215–216; these read GN and ER. The active-site Proton acceptor is the Cys-224. Position 225-226 (225-226) interacts with substrate; the sequence is GS. The disordered stretch occupies residues 278 to 303; it reads FDPATGEWSRDTQGLQGSGNADRGAA.

Belongs to the diaminopimelate epimerase family. In terms of assembly, homodimer.

Its subcellular location is the cytoplasm. The enzyme catalyses (2S,6S)-2,6-diaminopimelate = meso-2,6-diaminopimelate. The protein operates within amino-acid biosynthesis; L-lysine biosynthesis via DAP pathway; DL-2,6-diaminopimelate from LL-2,6-diaminopimelate: step 1/1. In terms of biological role, catalyzes the stereoinversion of LL-2,6-diaminopimelate (L,L-DAP) to meso-diaminopimelate (meso-DAP), a precursor of L-lysine and an essential component of the bacterial peptidoglycan. This chain is Diaminopimelate epimerase, found in Brucella abortus (strain S19).